Here is a 94-residue protein sequence, read N- to C-terminus: Small ribosomal subunit protein uS19 (94 aa).

The protein belongs to the universal ribosomal protein uS19 family.

Protein S19 forms a complex with S13 that binds strongly to the 16S ribosomal RNA. This is Small ribosomal subunit protein uS19 from Wolbachia pipientis subsp. Culex pipiens (strain wPip).